A 319-amino-acid polypeptide reads, in one-letter code: uncharacterized protein (319 aa).

The tract at residues 21 to 70 (ETETLKNSTDEVQTSSSFSSSGGRQSSPLTSGSKLEREKQTPSLEQGDTQ) is disordered. The span at 25 to 34 (LKNSTDEVQT) shows a compositional bias: polar residues. Low complexity predominate over residues 35–51 (SSSFSSSGGRQSSPLTS). Positions 61–70 (TPSLEQGDTQ) are enriched in polar residues.

This is an uncharacterized protein from Homo sapiens (Human).